Reading from the N-terminus, the 332-residue chain is Probable cytosolic iron-sulfur protein assembly protein 1 (332 aa).

WD repeat units lie at residues 9–48 (GHTDRAWAASVHPNLPLLATCSGDKTVRIYNTNNWELVTT), 52–93 (GHNR…WQFL), 98–137 (GHENEVKGVSWSCDGQLLATCSRDKSIWVWEADDMNDEFE), 144–183 (DHTQDVKHVAWHPSEMVFASASYDDTVRLWREDDDDWICV), 188–230 (GHES…GGTG), 257–295 (AHTRAIYSVAWNKNGRIASTGADGKLVVYKENGPGQWVV), and 302–332 (AHGVYEVNDVVWLDDKLVTSGDDGVVNIWEV).

The protein belongs to the WD repeat CIA1 family. Interacts with NAR1.

The protein localises to the cytoplasm. It localises to the nucleus. In terms of biological role, essential component of the cytosolic iron-sulfur (Fe/S) protein assembly machinery. Required for the maturation of extramitochondrial Fe/S proteins. The chain is Probable cytosolic iron-sulfur protein assembly protein 1 from Yarrowia lipolytica (strain CLIB 122 / E 150) (Yeast).